Consider the following 230-residue polypeptide: Ribose-5-phosphate isomerase A (230 aa).

Residues 31–34 (TGST), 88–91 (DGSD), and 101–104 (KGGG) contribute to the substrate site. Residue Glu-110 is the Proton acceptor of the active site. Lys-128 provides a ligand contact to substrate.

Belongs to the ribose 5-phosphate isomerase family. In terms of assembly, homodimer.

It catalyses the reaction aldehydo-D-ribose 5-phosphate = D-ribulose 5-phosphate. It functions in the pathway carbohydrate degradation; pentose phosphate pathway; D-ribose 5-phosphate from D-ribulose 5-phosphate (non-oxidative stage): step 1/1. Functionally, catalyzes the reversible conversion of ribose-5-phosphate to ribulose 5-phosphate. The sequence is that of Ribose-5-phosphate isomerase A from Lactobacillus helveticus (strain DPC 4571).